We begin with the raw amino-acid sequence, 205 residues long: Small ribosomal subunit protein bS16 (205 aa).

The tract at residues 110–205 (GEEVKIAVGT…ADDNEEPEDE (96 aa)) is disordered. The span at 123 to 132 (DPLERERERA) shows a compositional bias: basic and acidic residues. The span at 153–205 (EETEAEEAEDVETADAEDADAASETDEPEAAADEADETDASADADDNEEPEDE) shows a compositional bias: acidic residues.

Belongs to the bacterial ribosomal protein bS16 family.

This is Small ribosomal subunit protein bS16 from Salinibacter ruber (strain DSM 13855 / M31).